Consider the following 615-residue polypeptide: Translation initiation factor IF-2 (615 aa).

The 168-residue stretch at 118-285 folds into the tr-type G domain; the sequence is KRPPIVTVMG…AILTLAEINE (168 aa). The interval 127-134 is G1; that stretch reads GHVDHGKT. GTP is bound at residue 127–134; sequence GHVDHGKT. The interval 152-156 is G2; the sequence is GITQH. The tract at residues 173 to 176 is G3; sequence DTPG. GTP contacts are provided by residues 173 to 177 and 227 to 230; these read DTPGH and NKMD. The G4 stretch occupies residues 227–230; the sequence is NKMD. The tract at residues 263–265 is G5; that stretch reads SAI.

The protein belongs to the TRAFAC class translation factor GTPase superfamily. Classic translation factor GTPase family. IF-2 subfamily.

It is found in the cytoplasm. One of the essential components for the initiation of protein synthesis. Protects formylmethionyl-tRNA from spontaneous hydrolysis and promotes its binding to the 30S ribosomal subunits. Also involved in the hydrolysis of GTP during the formation of the 70S ribosomal complex. This chain is Translation initiation factor IF-2, found in Mycoplasmoides gallisepticum (strain R(low / passage 15 / clone 2)) (Mycoplasma gallisepticum).